We begin with the raw amino-acid sequence, 255 residues long: Protein DAL82 (255 aa).

The disordered stretch occupies residues 87 to 149; the sequence is PEHPRPRTKF…SQPLPLDSIT (63 aa). The segment covering 128–138 has biased composition (basic and acidic residues); sequence PNNHSSDDEHS.

Positive regulator of allophanate-induced genes in S.cerevisiae. This is Protein DAL82 (DAL82) from Saccharomyces cerevisiae (strain ATCC 204508 / S288c) (Baker's yeast).